The sequence spans 369 residues: Phosphoribosylformylglycinamidine cyclo-ligase (369 aa).

Residues 1-22 (MSKRDTSQPKTGQPKTSKRRNG) are disordered.

It belongs to the AIR synthase family.

The protein localises to the cytoplasm. The catalysed reaction is 2-formamido-N(1)-(5-O-phospho-beta-D-ribosyl)acetamidine + ATP = 5-amino-1-(5-phospho-beta-D-ribosyl)imidazole + ADP + phosphate + H(+). Its pathway is purine metabolism; IMP biosynthesis via de novo pathway; 5-amino-1-(5-phospho-D-ribosyl)imidazole from N(2)-formyl-N(1)-(5-phospho-D-ribosyl)glycinamide: step 2/2. The protein is Phosphoribosylformylglycinamidine cyclo-ligase of Mesorhizobium japonicum (strain LMG 29417 / CECT 9101 / MAFF 303099) (Mesorhizobium loti (strain MAFF 303099)).